We begin with the raw amino-acid sequence, 140 residues long: Putative nickel-responsive regulator 2 (140 aa).

Histidine 77, histidine 88, histidine 90, and cysteine 96 together coordinate Ni(2+).

It belongs to the transcriptional regulatory CopG/NikR family. Ni(2+) serves as cofactor.

In terms of biological role, transcriptional regulator. The polypeptide is Putative nickel-responsive regulator 2 (Methanothermobacter thermautotrophicus (strain ATCC 29096 / DSM 1053 / JCM 10044 / NBRC 100330 / Delta H) (Methanobacterium thermoautotrophicum)).